The primary structure comprises 595 residues: Myb-like protein D (595 aa).

Disordered regions lie at residues 1 to 47 (MQQQ…NGLV), 55 to 74 (QQYQ…DEGE), 82 to 266 (DESQ…NNRK), and 319 to 445 (VLQK…IWTQ). Low complexity predominate over residues 19 to 47 (DNYNNNNSNINTNNNNSINDYENQNNGLV). Over residues 60 to 74 (DQNDSFDDDSMDEGE) the composition is skewed to acidic residues. 2 stretches are compositionally biased toward low complexity: residues 90–212 (NNNN…ENNN) and 225–264 (NNNN…NNNN). The segment covering 324-348 (TLNRNRSRSRSRSNSRSHSRSRSRS) has biased composition (basic residues). Low complexity-rich tracts occupy residues 349–368 (RSLS…YSRS) and 376–420 (NNNN…NNNN). Over residues 423-434 (RKSEDDNQDDGK) the composition is skewed to basic and acidic residues. An HTH myb-type domain is found at 435 to 489 (KKHRKNAIWTQEEDEKMAQLYNKYGKSWKAIHSHFDDKTREQVQSHGQYLIRIGK). Residues 462–485 (WKAIHSHFDDKTREQVQSHGQYLI) constitute a DNA-binding region (H-T-H motif). Residues 494-595 (HRDGRKERRK…NSSNYVNNDN (102 aa)) form a disordered region. Low complexity predominate over residues 517–595 (QQNQQNNNNN…NSSNYVNNDN (79 aa)).

It is found in the nucleus. In Dictyostelium discoideum (Social amoeba), this protein is Myb-like protein D (mybD).